The chain runs to 479 residues: Ribulose bisphosphate carboxylase large chain 2 (479 aa).

Positions 116 and 166 each coordinate substrate. K168 acts as the Proton acceptor in catalysis. K170 provides a ligand contact to substrate. The Mg(2+) site is built by K194, D196, and E197. Residue K194 is modified to N6-carboxylysine. Residue H287 is the Proton acceptor of the active site. Substrate is bound by residues R288, H320, and S372.

It belongs to the RuBisCO large chain family. Type I subfamily. In terms of assembly, heterohexadecamer of 8 large chains and 8 small chains. Mg(2+) serves as cofactor.

It catalyses the reaction 2 (2R)-3-phosphoglycerate + 2 H(+) = D-ribulose 1,5-bisphosphate + CO2 + H2O. It carries out the reaction D-ribulose 1,5-bisphosphate + O2 = 2-phosphoglycolate + (2R)-3-phosphoglycerate + 2 H(+). Its function is as follows. RuBisCO catalyzes two reactions: the carboxylation of D-ribulose 1,5-bisphosphate, the primary event in carbon dioxide fixation, as well as the oxidative fragmentation of the pentose substrate. Both reactions occur simultaneously and in competition at the same active site. The polypeptide is Ribulose bisphosphate carboxylase large chain 2 (Bradyrhizobium sp. (strain BTAi1 / ATCC BAA-1182)).